A 1078-amino-acid chain; its full sequence is Transmembrane protein 132B (1078 aa).

At methionine 1–alanine 903 the chain is on the extracellular side. Residues asparagine 343, asparagine 366, and asparagine 381 are each glycosylated (N-linked (GlcNAc...) asparagine). Positions arginine 834 to leucine 887 are disordered. The segment covering glutamate 841–serine 852 has biased composition (polar residues). The chain crosses the membrane as a helical span at residues leucine 904–tryptophan 924. At lysine 925–methionine 1078 the chain is on the cytoplasmic side.

It belongs to the TMEM132 family.

The protein resides in the membrane. This Homo sapiens (Human) protein is Transmembrane protein 132B (TMEM132B).